Reading from the N-terminus, the 156-residue chain is Endoribonuclease YbeY (156 aa).

Positions 117, 121, and 127 each coordinate Zn(2+).

Belongs to the endoribonuclease YbeY family. Zn(2+) serves as cofactor.

The protein localises to the cytoplasm. In terms of biological role, single strand-specific metallo-endoribonuclease involved in late-stage 70S ribosome quality control and in maturation of the 3' terminus of the 16S rRNA. This is Endoribonuclease YbeY from Shewanella frigidimarina (strain NCIMB 400).